We begin with the raw amino-acid sequence, 231 residues long: Ribose-5-phosphate isomerase A (231 aa).

Substrate contacts are provided by residues 28-31 (TGST), 83-86 (DGAD), and 96-99 (KGGG). The active-site Proton acceptor is glutamate 105. A substrate-binding site is contributed by lysine 123.

This sequence belongs to the ribose 5-phosphate isomerase family. As to quaternary structure, homodimer.

It catalyses the reaction aldehydo-D-ribose 5-phosphate = D-ribulose 5-phosphate. It participates in carbohydrate degradation; pentose phosphate pathway; D-ribose 5-phosphate from D-ribulose 5-phosphate (non-oxidative stage): step 1/1. Catalyzes the reversible conversion of ribose-5-phosphate to ribulose 5-phosphate. This chain is Ribose-5-phosphate isomerase A, found in Sinorhizobium medicae (strain WSM419) (Ensifer medicae).